Consider the following 548-residue polypeptide: WEB family protein At1g12150 (548 aa).

A coiled-coil region spans residues 71–544 (KEFMKIKQKL…ELQRWRQQEN (474 aa)). The span at 430-448 (VREEMKMISQKQESKKQDE) shows a compositional bias: basic and acidic residues. The disordered stretch occupies residues 430–455 (VREEMKMISQKQESKKQDEESSGSKI).

Belongs to the WEB family.

This chain is WEB family protein At1g12150, found in Arabidopsis thaliana (Mouse-ear cress).